Reading from the N-terminus, the 516-residue chain is Lysophosphatidylcholine acyltransferase 2B (516 aa).

Residue N28 is glycosylated (N-linked (GlcNAc...) asparagine). 3 consecutive transmembrane segments (helical) span residues 44–64 (THLS…LVPV), 68–88 (CIVF…INLP), and 102–122 (LIKS…GFLV). An HXXXXD motif motif is present at residues 142 to 147 (HSTFFD). EF-hand domains lie at 387–422 (PISE…LCNP) and 424–459 (NTEK…AFGV). Ca(2+)-binding residues include D400, N402, D404, T406, E411, D437, D439, D441, Y443, and E448.

This sequence belongs to the 1-acyl-sn-glycerol-3-phosphate acyltransferase family.

The protein resides in the membrane. It participates in lipid metabolism; phospholipid metabolism. Probable acetyltransferase. The chain is Lysophosphatidylcholine acyltransferase 2B (Lpcat2b) from Mus musculus (Mouse).